Reading from the N-terminus, the 819-residue chain is Proteome of basal body protein 15 (819 aa).

Low complexity-rich tracts occupy residues 46–59 (PASSPAKAPANPGR) and 572–581 (RQQQQQQQHT). 2 disordered regions span residues 46 to 72 (PASSPAKAPANPGRSAPPSPGPRLATG) and 564 to 590 (ERQRRLLERQQQQQQQHTKGGGGGGGV). Positions 546-580 (YVVLREAVARVQARMEQQERQRRLLERQQQQQQQH) form a coiled coil.

The protein resides in the cytoplasm. It localises to the cytoskeleton. Its subcellular location is the microtubule organizing center. The protein localises to the centrosome. It is found in the centriole. This chain is Proteome of basal body protein 15, found in Chlamydomonas reinhardtii (Chlamydomonas smithii).